The following is a 284-amino-acid chain: 2,3,4,5-tetrahydropyridine-2,6-dicarboxylate N-succinyltransferase (284 aa).

2 residues coordinate substrate: R111 and D148.

This sequence belongs to the transferase hexapeptide repeat family. As to quaternary structure, homotrimer.

It localises to the cytoplasm. It carries out the reaction (S)-2,3,4,5-tetrahydrodipicolinate + succinyl-CoA + H2O = (S)-2-succinylamino-6-oxoheptanedioate + CoA. It functions in the pathway amino-acid biosynthesis; L-lysine biosynthesis via DAP pathway; LL-2,6-diaminopimelate from (S)-tetrahydrodipicolinate (succinylase route): step 1/3. The protein is 2,3,4,5-tetrahydropyridine-2,6-dicarboxylate N-succinyltransferase of Brucella suis (strain ATCC 23445 / NCTC 10510).